The sequence spans 480 residues: CASP8 and FADD-like apoptosis regulator (480 aa).

DED domains lie at 1–73 (MSAE…RILK) and 92–170 (DYRV…KIQK). The segment at 1–195 (MSAEVIHQVE…LQAAIQKSLK (195 aa)) is interaction with CASP8. The interval 1–227 (MSAEVIHQVE…GAQQEPVKKS (227 aa)) is interaction with FADD. Positions 1–305 (MSAEVIHQVE…FACMPEHRDY (305 aa)) are interaction with CASP8 propeptide. The tract at residues 1 to 435 (MSAEVIHQVE…CLSQKLRQER (435 aa)) is not proteolytically processed and involved in apoptosis inhibition. Positions 192-435 (KSLKDPSNNF…CLSQKLRQER (244 aa)) are interaction with CASP3. The interval 192–480 (KSLKDPSNNF…LRKKLILSYT (289 aa)) is interaction with TRAF1 and TRAF2. Positions 217–480 (LGAQQEPVKK…LRKKLILSYT (264 aa)) are interaction with CASP8 subunits p18 and p10. Residues 263–358 (ETELLRDTFT…AGKPKMFFIQ (96 aa)) form a caspase region. The interval 370-480 (SSLLEVDGPA…LRKKLILSYT (111 aa)) is interaction with CASP8.

It belongs to the peptidase C14A family. TNFRSF6 stimulation triggers recruitment to the death-inducing signaling complex (DISC) formed by TNFRSF6, FADD and CASP8. A proteolytic fragment (p43) stays associated with the DISC. Also interacts with FADD, CASP8, CASP3, TRAF1, TRAF2 and Bcl-X(L) (in vitro). Interacts with RIPK1. As to quaternary structure, (Microbial infection) Interacts with HBV protein X. In terms of processing, proteolytically processed by CASP8 generating subunit p43 and p12. Widely expressed. Higher expression in skeletal muscle, pancreas, heart, kidney, placenta, and peripheral blood leukocytes. Also detected in diverse cell lines. Isoform 8 is predominantly expressed in testis and skeletal muscle.

In terms of biological role, apoptosis regulator protein which may function as a crucial link between cell survival and cell death pathways in mammalian cells. Acts as an inhibitor of TNFRSF6 mediated apoptosis. A proteolytic fragment (p43) is likely retained in the death-inducing signaling complex (DISC) thereby blocking further recruitment and processing of caspase-8 at the complex. Full length and shorter isoforms have been shown either to induce apoptosis or to reduce TNFRSF-triggered apoptosis. Lacks enzymatic (caspase) activity. The sequence is that of CASP8 and FADD-like apoptosis regulator (CFLAR) from Homo sapiens (Human).